A 107-amino-acid polypeptide reads, in one-letter code: Putative pterin-4-alpha-carbinolamine dehydratase (107 aa).

It belongs to the pterin-4-alpha-carbinolamine dehydratase family.

The enzyme catalyses (4aS,6R)-4a-hydroxy-L-erythro-5,6,7,8-tetrahydrobiopterin = (6R)-L-erythro-6,7-dihydrobiopterin + H2O. The sequence is that of Putative pterin-4-alpha-carbinolamine dehydratase from Paracoccus denitrificans (strain Pd 1222).